The chain runs to 333 residues: Diaminopimelate epimerase (333 aa).

Substrate is bound by residues Asn24 and Asn79. The active-site Proton donor is Cys88. Residues 89 to 90, Asn176, Asn210, and 228 to 229 contribute to the substrate site; these read GN and ER. The active-site Proton acceptor is the Cys237. 238–239 serves as a coordination point for substrate; sequence GT.

The protein belongs to the diaminopimelate epimerase family. In terms of assembly, homodimer.

Its subcellular location is the cytoplasm. The enzyme catalyses (2S,6S)-2,6-diaminopimelate = meso-2,6-diaminopimelate. Its pathway is amino-acid biosynthesis; L-lysine biosynthesis via DAP pathway; DL-2,6-diaminopimelate from LL-2,6-diaminopimelate: step 1/1. Its function is as follows. Catalyzes the stereoinversion of LL-2,6-diaminopimelate (L,L-DAP) to meso-diaminopimelate (meso-DAP), a precursor of L-lysine and an essential component of the bacterial peptidoglycan. The sequence is that of Diaminopimelate epimerase from Clostridium acetobutylicum (strain ATCC 824 / DSM 792 / JCM 1419 / IAM 19013 / LMG 5710 / NBRC 13948 / NRRL B-527 / VKM B-1787 / 2291 / W).